We begin with the raw amino-acid sequence, 422 residues long: Biofilm regulator 1 (422 aa).

Low complexity-rich tracts occupy residues 1 to 19 and 36 to 45; these read MSSS…TTSA and SGGSNNGNGS. Disordered regions lie at residues 1–86 and 116–207; these read MSSS…KCPP and RLSS…PSHP. Over residues 46-61 the composition is skewed to polar residues; sequence ALKSQISPRLSDTSRI. Low complexity-rich tracts occupy residues 69-81 and 120-143; these read TSGS…SSTP and PTLP…LSPV. Polar residues predominate over residues 146–159; the sequence is VINTPPQQPQSVSA. Over residues 160–194 the composition is skewed to low complexity; the sequence is STSPNTQYQYYQYQQQSSPIQQQQQQQQATPAATP. Polar residues predominate over residues 195 to 205; it reads TVMQMAQNQPS. The GATA-type zinc finger occupies 282 to 307; that stretch reads CHRCGTTETPEWRRGPKGVRTLCNAC.

In terms of assembly, interacts with HDA1.

Its subcellular location is the nucleus. Transcription factor required for hyphal growth, biofilm formation, and virulence. Promotes formation of both conventional and pheromone-stimulated biofilms. Binds and recruits HDA1 to promoters of hypha-specific genes in a rapamycin-dependent manner. Involved in the switch between two heritable states, the white and opaque states. These two cell types differ in many characteristics, including cell structure, mating competence, and virulence. Each state is heritable for many generations, and switching between states occurs stochastically at low frequency. The sequence is that of Biofilm regulator 1 (BRG1) from Candida albicans (strain SC5314 / ATCC MYA-2876) (Yeast).